The primary structure comprises 610 residues: MSDQFDAKAFLKTVTSQPGVYRMYDAGGTVIYVGKAKDLKKRLSSYFRSNLASRKTEALVAQIQQIDVTVTHTETEALLLEHNYIKLYQPRYNVLLRDDKSYPFIFLSGDTHPRLAMHRGAKHAKGEYFGPFPNGYAVRETLALLQKIFPIRQCENSVYRNRSRPCLQYQIGRCLGPCVEGLVSEEEYAQQVEYVRLFLSGKDDQVLTQLISRMETASQNLEFEEAARIRDQIQAVRRVTEKQFVSNTGNDLDVIGVAFDAGMACVHVLFIRQGKVLGSRSYFPKVPGGTELSEVVETFVGQFYLQGSQMRTLPGEILLDFNLSDKTLLADSLSELAGRKINVQTKPRGDRARYLKLARTNAATALISKLSQQSTVHQRLTALASVLKLPEVKRMECFDISHTMGEQTVASCVVFDANGPLRAEYRRYNITGITPGDDYAAMNQVLRRRYGKAIDDSKIPDVILIDGGKGQLAQAKNVFAELDVSWDKNHPLLLGVAKGADRKAGLETLFFEPEGEGFSLPPDSPALHVIQHIRDESHDHAIGGHRKKRAKVKNTSSLETIEGVGPKRRQMLLKYMGGLQGLRNASVEEIAKVPGISQGLAEKIFWSLKH.

One can recognise a GIY-YIG domain in the interval 16-94 (SQPGVYRMYD…IKLYQPRYNV (79 aa)). A UVR domain is found at 204–239 (DQVLTQLISRMETASQNLEFEEAARIRDQIQAVRRV).

It belongs to the UvrC family. In terms of assembly, interacts with UvrB in an incision complex.

The protein resides in the cytoplasm. Its function is as follows. The UvrABC repair system catalyzes the recognition and processing of DNA lesions. UvrC both incises the 5' and 3' sides of the lesion. The N-terminal half is responsible for the 3' incision and the C-terminal half is responsible for the 5' incision. The chain is UvrABC system protein C from Shigella boydii serotype 18 (strain CDC 3083-94 / BS512).